Here is a 192-residue protein sequence, read N- to C-terminus: Ribosome maturation factor RimM (192 aa).

In terms of domain architecture, PRC barrel spans 99 to 186 (ADEYHVSELV…RIEIAPPPGL (88 aa)).

Belongs to the RimM family. Binds ribosomal protein uS19.

Its subcellular location is the cytoplasm. An accessory protein needed during the final step in the assembly of 30S ribosomal subunit, possibly for assembly of the head region. Essential for efficient processing of 16S rRNA. May be needed both before and after RbfA during the maturation of 16S rRNA. It has affinity for free ribosomal 30S subunits but not for 70S ribosomes. The polypeptide is Ribosome maturation factor RimM (Microcystis aeruginosa (strain NIES-843 / IAM M-2473)).